Consider the following 311-residue polypeptide: Ribosomal RNA small subunit methyltransferase H (311 aa).

S-adenosyl-L-methionine-binding positions include 32-34, D52, F78, D99, and Q106; that span reads GGH.

The protein belongs to the methyltransferase superfamily. RsmH family.

The protein resides in the cytoplasm. It carries out the reaction cytidine(1402) in 16S rRNA + S-adenosyl-L-methionine = N(4)-methylcytidine(1402) in 16S rRNA + S-adenosyl-L-homocysteine + H(+). Specifically methylates the N4 position of cytidine in position 1402 (C1402) of 16S rRNA. This chain is Ribosomal RNA small subunit methyltransferase H, found in Halothermothrix orenii (strain H 168 / OCM 544 / DSM 9562).